The sequence spans 94 residues: Small ribosomal subunit protein uS19 (94 aa).

This sequence belongs to the universal ribosomal protein uS19 family.

Functionally, protein S19 forms a complex with S13 that binds strongly to the 16S ribosomal RNA. The chain is Small ribosomal subunit protein uS19 from Buchnera aphidicola subsp. Cinara cedri (strain Cc).